Here is a 317-residue protein sequence, read N- to C-terminus: Putative 2-hydroxyacid dehydrogenase SAB2178 (317 aa).

NAD(+) contacts are provided by residues 155-156, 234-236, and Asp260; these read EI and ASR. Arg236 is an active-site residue. The active site involves Glu265. Catalysis depends on His283, which acts as the Proton donor. 283–286 is a binding site for NAD(+); that stretch reads HIGN.

It belongs to the D-isomer specific 2-hydroxyacid dehydrogenase family.

The protein is Putative 2-hydroxyacid dehydrogenase SAB2178 of Staphylococcus aureus (strain bovine RF122 / ET3-1).